A 534-amino-acid chain; its full sequence is MEFISFVYTLIAFSSLLYFYLIWSESAKPKTTTHKAPPEASGAWPVIGHLRIMSGHPSAGIPHVNLGMLADKHGPIFSIRLGVHRVVVVSSPEVIKELFTTNDVAVSSRPSVKAGKHLAYDNAMLGFASYGAYWRQLRKIVSLELLSNRRLELQSHVSMSETGQFVKELYKLWEKKKSDGSGTEVGEGVVVDMKRWLGELNMNVVMRMVAGKRFGSGDNAEETKRCRRVMGDFFYLAGFFVPADALPYLGWLDLGGHEKRMKKAAKELDEVVGEWLAEHREREFSGEGKAQDFMDVMISVVKGADLQCEFDVDTIIKATCGTLIAGGTDTTAVVFVWALSLLLNHSHVLKKAQQELDKHVGKDRRVKESDLNNLIYLQAIVKETLRLYPPGPLAGTRRFTEDCVVGGYYIPKDTWLIVNLWKLQRDPRVWSDPLEFRPERFLAGDKTFDVKGQDFELIPFGAGRRICPGLSFGLQMLHLVLASLLQAFDMSTVSDEAVDMSESAGLTNMKATPLDVVVTPRLPPRLYNEIVEIY.

Residues 3–23 form a helical membrane-spanning segment; that stretch reads FISFVYTLIAFSSLLYFYLIW. Residue Cys-467 participates in heme binding.

The protein belongs to the cytochrome P450 family. It depends on heme as a cofactor. As to expression, expressed in leaves.

The protein localises to the membrane. It catalyses the reaction genkwanin + reduced [NADPH--hemoprotein reductase] + O2 = scutellarein 7-methyl ether + oxidized [NADPH--hemoprotein reductase] + H2O. The catalysed reaction is (2S)-sakuranetin + reduced [NADPH--hemoprotein reductase] + O2 = (2S)-7-methylcarthamidin + oxidized [NADPH--hemoprotein reductase] + H2O + H(+). It carries out the reaction apigenin 4',7-dimethyl ether + reduced [NADPH--hemoprotein reductase] + O2 = ladanein + oxidized [NADPH--hemoprotein reductase] + H2O + H(+). The enzyme catalyses (2S)-naringenin 4',7-dimethyl ether + reduced [NADPH--hemoprotein reductase] + O2 = (2S)-carthamidin-4',7-dimethyl ether + oxidized [NADPH--hemoprotein reductase] + H2O + H(+). It functions in the pathway flavonoid metabolism. Hydroxylase involved in the biosynthesis of polymethoxylated flavonoids natural products such as nevadensin and salvigenin, aroma compounds which contribute to the flavor of sweet basil, and exhibit pharmacological activities such as anti-allergic, anti-oxidant, antibacterial, anti-proliferative, and anti-inflammatory effects. Catalyzes the 6-hydroxylation of 7-O-methylated precursors such as the conversion of genkwanin (GENK) to scutellarein-7-methyl ether (SCU7Me). Can also use, with a lower efficiency, apigenin-7,4'-dimethyl ether (AdM), naringenin-7-methyl ether (SAK) and naringenin-7,4'-dimethyl ether (NdM) as substrates. The polypeptide is Flavonoid-6-hydroxylase (Ocimum basilicum (Sweet basil)).